Consider the following 185-residue polypeptide: Ribosome-recycling factor (185 aa).

The protein belongs to the RRF family.

It is found in the cytoplasm. Responsible for the release of ribosomes from messenger RNA at the termination of protein biosynthesis. May increase the efficiency of translation by recycling ribosomes from one round of translation to another. The chain is Ribosome-recycling factor from Sulfurovum sp. (strain NBC37-1).